Here is a 277-residue protein sequence, read N- to C-terminus: Deoxyguanosine kinase, mitochondrial (277 aa).

The N-terminal 39 residues, 1-39 (MAAGRFLLRRLRASFRSPLRNALVDAPHARAMHDGGGPR), are a transit peptide targeting the mitochondrion. 45–53 (GNIAVGKST) contacts ATP. Positions 70, 100, 111, and 118 each coordinate substrate. E141 (proton acceptor) is an active-site residue. 2 residues coordinate substrate: R142 and D147. 206 to 208 (RDR) contributes to the ATP binding site. E211 lines the substrate pocket. Residue 254-256 (EDF) coordinates ATP.

This sequence belongs to the DCK/DGK family. In terms of assembly, homodimer. Spleen and thymus. Expressed at much lower levels in the brain and liver.

The protein localises to the mitochondrion. It localises to the cytoplasm. It catalyses the reaction 2'-deoxyguanosine + ATP = dGMP + ADP + H(+). The catalysed reaction is 2'-deoxyadenosine + ATP = dAMP + ADP + H(+). In terms of biological role, phosphorylates deoxyguanosine and deoxyadenosine in the mitochondrial matrix, with the highest efficiency for deoxyguanosine. In non-replicating cells, where cytosolic dNTP synthesis is down-regulated, mtDNA synthesis depends solely on DGUOK and TK2. Phosphorylates certain nucleoside analogs. Widely used as target of antiviral and chemotherapeutic agents. This chain is Deoxyguanosine kinase, mitochondrial (Dguok), found in Mus musculus (Mouse).